The chain runs to 678 residues: Auxin response factor 7 (678 aa).

A DNA-binding region (TF-B3) is located at residues Phe128 to Met230. Disordered stretches follow at residues Ala360–Ala386 and Gly502–Val547. One can recognise a PB1 domain in the interval Arg548–Lys641. The tract at residues Pro643 to Cys678 is disordered.

The protein belongs to the ARF family. As to quaternary structure, homodimers and heterodimers. Expressed in roots, culms, leaves and young panicles.

It localises to the nucleus. Functionally, auxin response factors (ARFs) are transcriptional factors that bind specifically to the DNA sequence 5'-TGTCTC-3' found in the auxin-responsive promoter elements (AuxREs). This chain is Auxin response factor 7 (ARF7), found in Oryza sativa subsp. japonica (Rice).